We begin with the raw amino-acid sequence, 471 residues long: Alpha-galactosidase 5 (471 aa).

A signal peptide spans 1–18; sequence MFAFYFLTACTTLKGVFG. A disulfide bridge links cysteine 42 with cysteine 74. Substrate is bound by residues aspartate 72 and aspartate 73. Residue asparagine 105 is glycosylated (N-linked (GlcNAc...) asparagine). Cysteine 121 and cysteine 151 are disulfide-bonded. Lysine 147 serves as a coordination point for substrate. The Nucleophile role is filled by aspartate 149. Asparagine 175 carries an N-linked (GlcNAc...) asparagine glycan. A substrate-binding site is contributed by arginine 205. Aspartate 209 functions as the Proton donor in the catalytic mechanism. Intrachain disulfides connect cysteine 221–cysteine 237 and cysteine 223–cysteine 230. Residue glutamine 251 coordinates substrate. Residues asparagine 270, asparagine 370, asparagine 403, asparagine 422, asparagine 435, and asparagine 454 are each glycosylated (N-linked (GlcNAc...) asparagine).

Belongs to the glycosyl hydrolase 27 family. Homotetramer.

It is found in the secreted. The catalysed reaction is Hydrolysis of terminal, non-reducing alpha-D-galactose residues in alpha-D-galactosides, including galactose oligosaccharides, galactomannans and galactolipids.. The chain is Alpha-galactosidase 5 (MEL5) from Saccharomyces cerevisiae (Baker's yeast).